A 315-amino-acid polypeptide reads, in one-letter code: Calumenin (315 aa).

The N-terminal stretch at 1 to 19 is a signal peptide; the sequence is MDLRQFLLCLSLCTAFALS. Position 47 is a phosphotyrosine (Tyr-47). The residue at position 65 (Thr-65) is a Phosphothreonine. EF-hand domains are found at residues 68 to 103, 104 to 139, 151 to 186, 188 to 223, 229 to 264, and 265 to 300; these read ESKE…AQKR, WIHE…YVLD, QMMV…DEYD, MKDI…HDGN, WVKT…SDYD, and HAEA…FVGS. The residue at position 69 (Ser-69) is a Phosphoserine. Asp-81, Asp-83, Asp-85, Glu-92, Asp-117, Asn-119, Asp-121, and Glu-128 together coordinate Ca(2+). Asn-131 is a glycosylation site (N-linked (GlcNAc...) asparagine). Asp-164 is a Ca(2+) binding site. Lys-165 carries the N6-acetyllysine modification. Ca(2+)-binding residues include Asp-166, Asp-168, Glu-175, Asp-201, Asn-203, Asp-205, Glu-212, Asp-242, Asn-244, Asp-246, Arg-248, and Glu-253. Residue Thr-254 is modified to Phosphothreonine. Phosphoserine is present on residues Ser-261 and Ser-277. Asp-278, Asn-280, Asp-282, Lys-284, and Glu-289 together coordinate Ca(2+). The short motif at 312-315 is the Prevents secretion from ER element; sequence HDEF.

The protein belongs to the CREC family. In terms of assembly, interacts with GGCX.

The protein resides in the endoplasmic reticulum membrane. The protein localises to the golgi apparatus. It is found in the secreted. It localises to the melanosome. Its subcellular location is the sarcoplasmic reticulum lumen. Functionally, involved in regulation of vitamin K-dependent carboxylation of multiple N-terminal glutamate residues. Seems to inhibit gamma-carboxylase GGCX. Binds 7 calcium ions with a low affinity. This Mesocricetus auratus (Golden hamster) protein is Calumenin (CALU).